The primary structure comprises 479 residues: Integrin-linked protein kinase 1 (479 aa).

Residues serine 17 and serine 26 each carry the phosphoserine modification. Positions 29–73 (FTRQSSLDPRRTNMRFSFGRQSSLDPIRRSPDSSKSDDEPHMSVP) are disordered. The span at 54–69 (PIRRSPDSSKSDDEPH) shows a compositional bias: basic and acidic residues. ANK repeat units lie at residues 77 to 106 (DSTMQLLFMASKGDVRGIEELLDEGIDVNS) and 110 to 139 (DGRTALHIAACEGHLGVVKALLSRRANIDA). The 268-residue stretch at 194-461 (LEVQVRKSDG…EIIIRLDKIV (268 aa)) folds into the Protein kinase domain. Residues 200-208 (KSDGISKGA) and lysine 222 contribute to the ATP site. Aspartate 319 acts as the Proton acceptor in catalysis.

This sequence belongs to the protein kinase superfamily. Ser/Thr protein kinase family. Interacts with CML9 and POT5/HAK5. In terms of processing, autophosphorylated at Ser-17 and Ser-26.

The protein resides in the cell membrane. It localises to the endoplasmic reticulum membrane. The enzyme catalyses L-seryl-[protein] + ATP = O-phospho-L-seryl-[protein] + ADP + H(+). It catalyses the reaction L-threonyl-[protein] + ATP = O-phospho-L-threonyl-[protein] + ADP + H(+). Its activity is regulated as follows. Kinase activity is suppressed by interaction with CML9. In terms of biological role, functions as a link between plant defense pathways, stress responses and potassium homeostasis. Promotes osmotic stress sensitivity, responses to the bacterial-derived pathogen-associated molecular pattern (PAMP) flg22, and resistance to bacterial pathogens. Promotes the accumulation of POT5/HAK5, a potassium transporter that mediates high-affinity uptake during potassium deficiency. This is Integrin-linked protein kinase 1 from Arabidopsis thaliana (Mouse-ear cress).